We begin with the raw amino-acid sequence, 306 residues long: MERIPASAGPEAIFEAFRRDGIIVIEGFLTPDQVQRFSSEVQPGLDELTVGAPEHDEAAQTATVMDEMIGEKTKRLGQLVTRSAVFRHELLEHELMHALLEKVFVEGPMDGYWMNASEVIEIAPGSNAQPIHRDQELYDVWNRAGPAMPEAICNFISALTPFTALNGATQVAPGTHRDFTSDHLLDRDFQGRSDLKTIPAVMNPGDCIFFSGKILHGGGANHTADELRRGLAMSFIRRILTPEEAHPLSVSREIVDTMTYRGQAMLGFRSQWPVIEGVPNFYWTHQGSEIGSHIGLKEKTSGSVVL.

Fe cation contacts are provided by histidine 132, aspartate 134, and histidine 216.

Belongs to the PhyH family. Homodimer. Requires Fe cation as cofactor.

It catalyses the reaction (1S,4S)-4-[(4-methoxyphenyl)methyl]-2-methyl-2,5-diazaspiro[bicyclo[3.2.1]octane-6,1'-cyclohexan]-4'-one + 2-oxoglutarate + O2 = (2S)-3-(4-methoxyphenyl)-2-[(3S)-3-(methylamino)-8-oxo-1-azaspiro[4.5]decan-1-yl]propanal + succinate + CO2. It functions in the pathway secondary metabolite biosynthesis. In terms of biological role, dioxygenase; part of the gene cluster that mediates the biosynthesis of the alkaloid (-)-FR901483, a potent immunosuppressant that shows efficacy in animal models and a probable inhibitor of purine nucleotide biosynthesis by targeting phosphoribosylpyrophosphate amidotransferase (PPAT). Within the pathway, FrzG cleaves the C9-N10' bond to yield a conjugated iminium. FrzG is also able to catalyze the dehydrogenation between C7 and C8 which leads to a shunt product. The biosynthesis of (-)-FR901483 starts with the condensation of two L-tyrosines to yield (S,S)-dityrosyl-piperazine. This process occurs in 3 steps with the non-canonical nonribosomal peptide synthetase FrzA catalyzing the reduction of L-tyrosine into L-tyrosinal, the spontaneous condensation of 2 L-tyrosinal units, and the subsequent reduction by the NmrA-like family domain-containing oxidoreductase FrzB. The cytochrome P450 monooxygenase FrzC then performs coupling between N10 and C1' to morph the piperazine into a 1,4-diazabicyclo[3.2.1]octane spiro-fused to a 2,5-cyclohexadienone. The dienone portion is further reduced to cyclohexanone by the flavin-dependent reductase FrzD. The methyltranserases (MTs) FrzE and FrzF are then involved in the methylation at the C10' amine and the C4 phenolic oxygen, respectively. The order of the two MTs appear to be interchangeable. Cleavage of the C9-N10' bond by the dioxygenase FrzG then leads to formation of a conjugated iminium. In addition to the oxidation of C9, an additional dehydrogenation between C7 and C8 can occur to give a likely shunt product. The next biosynthetic step is the intramolecular aldol condensation catalyzed by the newly identified aldolase FrzH to yield an aza-tricyclic product with the formation of a C9-C3' bond. The short-chain dehydrogenase/reductase FrzI then produces dephospho-(-)-FR901483 that is phosphorylated at C4'-OH into (-)-FR901483 by the phosphotransferase FrzJ. This chain is Dioxygenase FrzG, found in Cladobotryum sp.